The primary structure comprises 115 residues: Transmembrane protein 218 (115 aa).

Helical transmembrane passes span 5-25, 38-58, and 81-101; these read VLGV…VLLL, FSVI…LLFP, and YVLL…VLIH.

It belongs to the TMEM218 family. As to quaternary structure, interacts with TMEM67.

It localises to the membrane. Its subcellular location is the cell projection. It is found in the cilium. Functionally, may be involved in ciliary biogenesis or function. This Homo sapiens (Human) protein is Transmembrane protein 218 (TMEM218).